We begin with the raw amino-acid sequence, 171 residues long: UPF0303 protein YPK_1581 (171 aa).

The protein belongs to the UPF0303 family.

The polypeptide is UPF0303 protein YPK_1581 (Yersinia pseudotuberculosis serotype O:3 (strain YPIII)).